Here is a 204-residue protein sequence, read N- to C-terminus: Holliday junction branch migration complex subunit RuvA (204 aa).

The segment at 1 to 64 (MIGRLRGTLI…EDAQLLYGFN (64 aa)) is domain I. The interval 65–143 (TVSERALFRE…GWGAGDLFTP (79 aa)) is domain II. Residues 144–155 (ATDAAPVDSTPV) form a flexible linker region. The interval 156–204 (IAQNAQEEAMSALLALGYKPPQASKAVSQVAKAGMSSEELIREALKSMV) is domain III.

This sequence belongs to the RuvA family. In terms of assembly, homotetramer. Forms an RuvA(8)-RuvB(12)-Holliday junction (HJ) complex. HJ DNA is sandwiched between 2 RuvA tetramers; dsDNA enters through RuvA and exits via RuvB. An RuvB hexamer assembles on each DNA strand where it exits the tetramer. Each RuvB hexamer is contacted by two RuvA subunits (via domain III) on 2 adjacent RuvB subunits; this complex drives branch migration. In the full resolvosome a probable DNA-RuvA(4)-RuvB(12)-RuvC(2) complex forms which resolves the HJ.

It localises to the cytoplasm. Functionally, the RuvA-RuvB-RuvC complex processes Holliday junction (HJ) DNA during genetic recombination and DNA repair, while the RuvA-RuvB complex plays an important role in the rescue of blocked DNA replication forks via replication fork reversal (RFR). RuvA specifically binds to HJ cruciform DNA, conferring on it an open structure. The RuvB hexamer acts as an ATP-dependent pump, pulling dsDNA into and through the RuvAB complex. HJ branch migration allows RuvC to scan DNA until it finds its consensus sequence, where it cleaves and resolves the cruciform DNA. The protein is Holliday junction branch migration complex subunit RuvA of Vibrio cholerae serotype O1 (strain ATCC 39541 / Classical Ogawa 395 / O395).